We begin with the raw amino-acid sequence, 1343 residues long: Xanthine dehydrogenase (1343 aa).

Residues 8-95 form the 2Fe-2S ferredoxin-type domain; that stretch reads SELVFFVNGK…GCAVTTVEGI (88 aa). Positions 47, 52, 55, 77, 117, 120, 152, and 154 each coordinate [2Fe-2S] cluster. The FAD-binding PCMH-type domain maps to 235–424; the sequence is FSSERVTWYR…LGIHFQKTTP (190 aa). FAD contacts are provided by residues 263–270, Phe343, 353–357, Asp366, Leu414, and Lys432; these read LVVGNTEV and CLGGN. Positions 780 and 811 each coordinate Mo-molybdopterin. Substrate is bound by residues Glu815 and Arg893. Arg925 serves as a coordination point for Mo-molybdopterin. Phe927 is a substrate binding site. Ala1092 serves as a coordination point for Mo-molybdopterin. Catalysis depends on Glu1275, which acts as the Proton acceptor.

The protein belongs to the xanthine dehydrogenase family. In terms of assembly, homodimer. FAD is required as a cofactor. It depends on Mo-molybdopterin as a cofactor. The cofactor is [2Fe-2S] cluster.

The protein localises to the peroxisome. The enzyme catalyses xanthine + NAD(+) + H2O = urate + NADH + H(+). It carries out the reaction hypoxanthine + NAD(+) + H2O = xanthine + NADH + H(+). In terms of biological role, key enzyme in purine degradation. Catalyzes the oxidation of hypoxanthine to xanthine. Catalyzes the oxidation of xanthine to uric acid. The protein is Xanthine dehydrogenase (ry) of Drosophila pseudoobscura pseudoobscura (Fruit fly).